The sequence spans 252 residues: 2-succinyl-6-hydroxy-2,4-cyclohexadiene-1-carboxylate synthase (252 aa).

This sequence belongs to the AB hydrolase superfamily. MenH family. Monomer.

It carries out the reaction 5-enolpyruvoyl-6-hydroxy-2-succinyl-cyclohex-3-ene-1-carboxylate = (1R,6R)-6-hydroxy-2-succinyl-cyclohexa-2,4-diene-1-carboxylate + pyruvate. The protein operates within quinol/quinone metabolism; 1,4-dihydroxy-2-naphthoate biosynthesis; 1,4-dihydroxy-2-naphthoate from chorismate: step 3/7. Its pathway is quinol/quinone metabolism; menaquinone biosynthesis. Its function is as follows. Catalyzes a proton abstraction reaction that results in 2,5-elimination of pyruvate from 2-succinyl-5-enolpyruvyl-6-hydroxy-3-cyclohexene-1-carboxylate (SEPHCHC) and the formation of 2-succinyl-6-hydroxy-2,4-cyclohexadiene-1-carboxylate (SHCHC). The sequence is that of 2-succinyl-6-hydroxy-2,4-cyclohexadiene-1-carboxylate synthase from Salmonella newport (strain SL254).